We begin with the raw amino-acid sequence, 373 residues long: Ferroptosis suppressor protein 1 (373 aa).

The N-myristoyl glycine moiety is linked to residue Gly2. The helical transmembrane segment at 7 to 27 (VESGALHVVIVGGGFGGIAAA) threads the bilayer. Residues 18 to 22 (GGGFG), Arg54, and Val82 contribute to the 6-hydroxy-FAD site. Residue Lys168 is modified to N6-acetyllysine; by KAT2B. A 6-hydroxy-FAD-binding site is contributed by Asp285.

It belongs to the FAD-dependent oxidoreductase family. In terms of assembly, interacts with importin subunits KPNA2 and IPO5; this interaction likely mediates the translocation into the nucleus upon oxidative stress. 6-hydroxy-FAD serves as cofactor. Post-translationally, N-myristoylation at Gly-2 mediates the recruitment to lipid droplets and plasma membrane, enabling its anti-lipid peroxidation activity. In terms of processing, acetylation at Lys-168 prevents AIFM2 ubiquitination and degradation, thereby inhibiting ferroptosis. KAT2B mediates acetylation at Lys-168, while HDAC3 removes it. Ubiquitinated. AIFM2 undergoes 'Lys-29'-ubiquitination and proteasomal degradation, which is inhibited by acetylation at Lys-168. As to expression, detected in most normal tissues as two transcripts of 1.8 and 4.0 kb in length, respectively. Highly expressed in heart, moderately in liver and skeletal muscles, and expressed at low levels in placenta, lung, kidney, and pancreas. Both transcripts expressed following p53/TP53 induction. The shorter 1.8 kb transcript seems to be the major transcript in EB1 colon cancer cells.

The protein localises to the lipid droplet. It localises to the cell membrane. The protein resides in the cytoplasm. It is found in the mitochondrion membrane. Its subcellular location is the nucleus. The catalysed reaction is ubiquinone-10 + NADH + H(+) = ubiquinol-10 + NAD(+). It catalyses the reaction phylloquinone + NADH + H(+) = phylloquinol + NAD(+). It carries out the reaction menaquinone-4 + NADH + H(+) = menaquinol-4 + NAD(+). The enzyme catalyses menadione + NADH + H(+) = menadiol + NAD(+). The modification by 4-hydroxy-2-nonenal (HNE) adduction in mitochondria results in loss of the oxidoreductase activity and activation of a novel function in mitochondrial oxidative stress signaling. An NAD(P)H-dependent oxidoreductase that acts as a key inhibitor of ferroptosis. At the plasma membrane, catalyzes reduction of coenzyme Q/ubiquinone-10 to ubiquinol-10, a lipophilic radical-trapping antioxidant that prevents lipid oxidative damage and consequently ferroptosis. Acts in parallel to GPX4 to suppress phospholipid peroxidation and ferroptosis. This anti-ferroptotic function is independent of cellular glutathione levels. Also acts as a potent radical-trapping antioxidant by mediating warfarin-resistant vitamin K reduction in the canonical vitamin K cycle: catalyzes NAD(P)H-dependent reduction of vitamin K (phylloquinone, menaquinone-4 and menadione) to hydroquinone forms. Hydroquinones act as potent radical-trapping antioxidants inhibitor of phospholipid peroxidation and ferroptosis. May play a role in mitochondrial stress signaling. Upon oxidative stress, associates with the lipid peroxidation end product 4-hydroxy-2-nonenal (HNE) forming a lipid adduct devoid of oxidoreductase activity, which then translocates from mitochondria into the nucleus triggering DNA damage and cell death. Capable of DNA binding in a non-sequence specific way. The protein is Ferroptosis suppressor protein 1 of Homo sapiens (Human).